Here is a 322-residue protein sequence, read N- to C-terminus: CPX chromosomal region candidate gene 1 protein homolog (322 aa).

2 stretches are compositionally biased toward polar residues: residues 1–23 (MTSS…NETP) and 37–78 (TNIS…TQND). The segment at 1–83 (MTSSNQGNDP…MTQNDPPDEE (83 aa)) is disordered.

The chain is CPX chromosomal region candidate gene 1 protein homolog (Cpxcr1) from Mus musculus (Mouse).